A 261-amino-acid polypeptide reads, in one-letter code: Proteasome subunit alpha type-4 (261 aa).

Residues Ser13 and Ser75 each carry the phosphoserine modification. Lys127 is subject to N6-acetyllysine. The residue at position 173 (Ser173) is a Phosphoserine. Lys176 carries the N6-acetyllysine modification. The disordered stretch occupies residues 240–261 (HEEEEAKAEREKKEKEQREKDK).

Belongs to the peptidase T1A family. As to quaternary structure, the 26S proteasome consists of a 20S proteasome core and two 19S regulatory subunits. The 20S proteasome core is a barrel-shaped complex made of 28 subunits that are arranged in four stacked rings. The two outer rings are each formed by seven alpha subunits, and the two inner rings are formed by seven beta subunits. The proteolytic activity is exerted by three beta-subunits PSMB5, PSMB6 and PSMB7. As to expression, ubiquitous.

Its subcellular location is the cytoplasm. It is found in the nucleus. Functionally, component of the 20S core proteasome complex involved in the proteolytic degradation of most intracellular proteins. This complex plays numerous essential roles within the cell by associating with different regulatory particles. Associated with two 19S regulatory particles, forms the 26S proteasome and thus participates in the ATP-dependent degradation of ubiquitinated proteins. The 26S proteasome plays a key role in the maintenance of protein homeostasis by removing misfolded or damaged proteins that could impair cellular functions, and by removing proteins whose functions are no longer required. Associated with the PA200 or PA28, the 20S proteasome mediates ubiquitin-independent protein degradation. This type of proteolysis is required in several pathways including spermatogenesis (20S-PA200 complex) or generation of a subset of MHC class I-presented antigenic peptides (20S-PA28 complex). This is Proteasome subunit alpha type-4 (Psma4) from Rattus norvegicus (Rat).